The primary structure comprises 335 residues: Tetraacyldisaccharide 4'-kinase (335 aa).

An ATP-binding site is contributed by 58 to 65; it reads TVGGSGKT.

The protein belongs to the LpxK family.

It carries out the reaction a lipid A disaccharide + ATP = a lipid IVA + ADP + H(+). The protein operates within glycolipid biosynthesis; lipid IV(A) biosynthesis; lipid IV(A) from (3R)-3-hydroxytetradecanoyl-[acyl-carrier-protein] and UDP-N-acetyl-alpha-D-glucosamine: step 6/6. Its function is as follows. Transfers the gamma-phosphate of ATP to the 4'-position of a tetraacyldisaccharide 1-phosphate intermediate (termed DS-1-P) to form tetraacyldisaccharide 1,4'-bis-phosphate (lipid IVA). This is Tetraacyldisaccharide 4'-kinase from Shewanella sp. (strain MR-4).